A 380-amino-acid polypeptide reads, in one-letter code: 3-dehydroquinate synthase (380 aa).

The protein belongs to the archaeal-type DHQ synthase family.

It carries out the reaction 2-amino-2,3,7-trideoxy-D-lyxo-hept-6-ulosonate + NAD(+) + H2O = 3-dehydroquinate + NH4(+) + NADH + H(+). Catalyzes the oxidative deamination and cyclization of 2-amino-3,7-dideoxy-D-threo-hept-6-ulosonic acid (ADH) to yield 3-dehydroquinate (DHQ), which is fed into the canonical shikimic pathway of aromatic amino acid biosynthesis. The sequence is that of 3-dehydroquinate synthase from Methanosarcina mazei (strain ATCC BAA-159 / DSM 3647 / Goe1 / Go1 / JCM 11833 / OCM 88) (Methanosarcina frisia).